A 452-amino-acid polypeptide reads, in one-letter code: Pup--protein ligase (452 aa).

Mg(2+) is bound at residue glutamate 9. Arginine 53 contacts ATP. Tyrosine 55 is a Mg(2+) binding site. The Proton acceptor role is filled by aspartate 57. Glutamate 63 is a binding site for Mg(2+). ATP contacts are provided by threonine 66 and tryptophan 419.

It belongs to the Pup ligase/Pup deamidase family. Pup-conjugating enzyme subfamily.

The catalysed reaction is ATP + [prokaryotic ubiquitin-like protein]-L-glutamate + [protein]-L-lysine = ADP + phosphate + N(6)-([prokaryotic ubiquitin-like protein]-gamma-L-glutamyl)-[protein]-L-lysine.. It functions in the pathway protein degradation; proteasomal Pup-dependent pathway. It participates in protein modification; protein pupylation. In terms of biological role, catalyzes the covalent attachment of the prokaryotic ubiquitin-like protein modifier Pup to the proteasomal substrate proteins, thereby targeting them for proteasomal degradation. This tagging system is termed pupylation. The ligation reaction involves the side-chain carboxylate of the C-terminal glutamate of Pup and the side-chain amino group of a substrate lysine. The polypeptide is Pup--protein ligase (Rhodococcus erythropolis (strain PR4 / NBRC 100887)).